The following is a 125-amino-acid chain: Ribonuclease P protein component 1 (125 aa).

Basic and acidic residues predominate over residues 1–13; sequence MRRNGKEGKDRAP. Residues 1–24 are disordered; it reads MRRNGKEGKDRAPGRPQRKGQEVA.

This sequence belongs to the eukaryotic/archaeal RNase P protein component 1 family. As to quaternary structure, consists of a catalytic RNA component and at least 4-5 protein subunits.

Its subcellular location is the cytoplasm. It carries out the reaction Endonucleolytic cleavage of RNA, removing 5'-extranucleotides from tRNA precursor.. Part of ribonuclease P, a protein complex that generates mature tRNA molecules by cleaving their 5'-ends. The chain is Ribonuclease P protein component 1 from Thermococcus onnurineus (strain NA1).